The primary structure comprises 620 residues: Chaperone protein HscA homolog (620 aa).

It belongs to the heat shock protein 70 family.

Its function is as follows. Chaperone involved in the maturation of iron-sulfur cluster-containing proteins. Has a low intrinsic ATPase activity which is markedly stimulated by HscB. The polypeptide is Chaperone protein HscA homolog (Pasteurella multocida (strain Pm70)).